We begin with the raw amino-acid sequence, 899 residues long: Translation initiation factor IF-2 (899 aa).

Disordered stretches follow at residues 116-135, 170-189, and 262-306; these read AKARAEQQAREAAEQKARLQ, RGGGTVKPAPKPAETLEQKK, and DREI…ANKH. The region spanning 399–568 is the tr-type G domain; the sequence is TRPPVVTIMG…LIQSELMELK (170 aa). Residues 408–415 are G1; the sequence is GHVDHGKT. 408-415 contacts GTP; it reads GHVDHGKT. Residues 433–437 form a G2 region; it reads GITQH. Residues 454–457 form a G3 region; the sequence is DTPG. GTP contacts are provided by residues 454–458 and 508–511; these read DTPGH and NKMD. Residues 508–511 are G4; the sequence is NKMD. The segment at 544 to 546 is G5; that stretch reads SAH.

Belongs to the TRAFAC class translation factor GTPase superfamily. Classic translation factor GTPase family. IF-2 subfamily.

It localises to the cytoplasm. One of the essential components for the initiation of protein synthesis. Protects formylmethionyl-tRNA from spontaneous hydrolysis and promotes its binding to the 30S ribosomal subunits. Also involved in the hydrolysis of GTP during the formation of the 70S ribosomal complex. This Acinetobacter baumannii (strain AB307-0294) protein is Translation initiation factor IF-2.